The primary structure comprises 460 residues: ATP synthase subunit beta (460 aa).

149–156 (GGAGVGKT) lines the ATP pocket.

It belongs to the ATPase alpha/beta chains family. F-type ATPases have 2 components, CF(1) - the catalytic core - and CF(0) - the membrane proton channel. CF(1) has five subunits: alpha(3), beta(3), gamma(1), delta(1), epsilon(1). CF(0) has three main subunits: a(1), b(2) and c(9-12). The alpha and beta chains form an alternating ring which encloses part of the gamma chain. CF(1) is attached to CF(0) by a central stalk formed by the gamma and epsilon chains, while a peripheral stalk is formed by the delta and b chains.

It localises to the cell membrane. The enzyme catalyses ATP + H2O + 4 H(+)(in) = ADP + phosphate + 5 H(+)(out). Its function is as follows. Produces ATP from ADP in the presence of a proton gradient across the membrane. The catalytic sites are hosted primarily by the beta subunits. The polypeptide is ATP synthase subunit beta (Acholeplasma laidlawii (strain PG-8A)).